Here is a 512-residue protein sequence, read N- to C-terminus: Maturase K (512 aa).

This sequence belongs to the intron maturase 2 family. MatK subfamily.

It is found in the plastid. Its subcellular location is the chloroplast. Usually encoded in the trnK tRNA gene intron. Probably assists in splicing its own and other chloroplast group II introns. The protein is Maturase K of Acer platanoides (Norway maple).